We begin with the raw amino-acid sequence, 323 residues long: NAC transcription factor 25 (323 aa).

Residues 16-177 (LPPGFRFHPT…DWVLCRIYKK (162 aa)) enclose the NAC domain. The DNA-binding element occupies 114–183 (VGVKKALVFY…IYKKNSSQRP (70 aa)). Low complexity predominate over residues 201-221 (KSSANSSSTSVLDNNDNNNNN). The disordered stretch occupies residues 201–223 (KSSANSSSTSVLDNNDNNNNNNE).

As to expression, expressed specifically in the tapetum.

It is found in the nucleus. Its function is as follows. Transcription factor of the NAC family. May be associated with anther development and pollen production. Required for normal seed development and morphology. This chain is NAC transcription factor 25 (NAC025), found in Arabidopsis thaliana (Mouse-ear cress).